Consider the following 219-residue polypeptide: Putative zinc metalloprotease YwhC (219 aa).

A helical membrane pass occupies residues 4–24 (FLYYPLSLMPYLVITLIVSFT). Histidine 26 contributes to the Zn(2+) binding site. Glutamate 27 is a catalytic residue. Histidine 30 provides a ligand contact to Zn(2+). The next 4 helical transmembrane spans lie at 52 to 72 (PIKH…FGWA), 94 to 114 (IAGP…LVLM), 132 to 152 (FFSI…LPLP), and 180 to 200 (FIVF…WPML).

It belongs to the peptidase M50B family. Zn(2+) serves as cofactor.

The protein localises to the cell membrane. In Bacillus subtilis (strain 168), this protein is Putative zinc metalloprotease YwhC (ywhC).